The chain runs to 160 residues: Ribosome maturation factor RimP (160 aa).

This sequence belongs to the RimP family.

It is found in the cytoplasm. Its function is as follows. Required for maturation of 30S ribosomal subunits. This Citrifermentans bemidjiense (strain ATCC BAA-1014 / DSM 16622 / JCM 12645 / Bem) (Geobacter bemidjiensis) protein is Ribosome maturation factor RimP.